Consider the following 485-residue polypeptide: tRNA sulfurtransferase (485 aa).

Positions 61-165 (EELIALLQRI…DDKMMLVKTR (105 aa)) constitute a THUMP domain. ATP contacts are provided by residues 183–184 (LI), Lys-265, Gly-287, and Gln-296. Cys-344 and Cys-456 are joined by a disulfide. The Rhodanese domain maps to 404–483 (LGENEVILDI…FSNVRVFAKN (80 aa)). Cys-456 (cysteine persulfide intermediate) is an active-site residue.

The protein belongs to the ThiI family.

The protein resides in the cytoplasm. The catalysed reaction is [ThiI sulfur-carrier protein]-S-sulfanyl-L-cysteine + a uridine in tRNA + 2 reduced [2Fe-2S]-[ferredoxin] + ATP + H(+) = [ThiI sulfur-carrier protein]-L-cysteine + a 4-thiouridine in tRNA + 2 oxidized [2Fe-2S]-[ferredoxin] + AMP + diphosphate. It carries out the reaction [ThiS sulfur-carrier protein]-C-terminal Gly-Gly-AMP + S-sulfanyl-L-cysteinyl-[cysteine desulfurase] + AH2 = [ThiS sulfur-carrier protein]-C-terminal-Gly-aminoethanethioate + L-cysteinyl-[cysteine desulfurase] + A + AMP + 2 H(+). It participates in cofactor biosynthesis; thiamine diphosphate biosynthesis. Catalyzes the ATP-dependent transfer of a sulfur to tRNA to produce 4-thiouridine in position 8 of tRNAs, which functions as a near-UV photosensor. Also catalyzes the transfer of sulfur to the sulfur carrier protein ThiS, forming ThiS-thiocarboxylate. This is a step in the synthesis of thiazole, in the thiamine biosynthesis pathway. The sulfur is donated as persulfide by IscS. This chain is tRNA sulfurtransferase, found in Haemophilus influenzae (strain 86-028NP).